The sequence spans 25 residues: Granule-bound starch synthase 1, chloroplastic/amyloplastic (25 aa).

Lys-16 is a binding site for ADP-alpha-D-glucose.

The protein belongs to the glycosyltransferase 1 family. Bacterial/plant glycogen synthase subfamily. In terms of tissue distribution, expressed in endosperm.

The protein resides in the plastid. It is found in the chloroplast. Its subcellular location is the amyloplast. It catalyses the reaction an NDP-alpha-D-glucose + [(1-&gt;4)-alpha-D-glucosyl](n) = [(1-&gt;4)-alpha-D-glucosyl](n+1) + a ribonucleoside 5'-diphosphate + H(+). Its pathway is glycan biosynthesis; starch biosynthesis. Required for the synthesis of amylose in endosperm. This Fagopyrum esculentum (Common buckwheat) protein is Granule-bound starch synthase 1, chloroplastic/amyloplastic.